Here is a 579-residue protein sequence, read N- to C-terminus: Adenine deaminase (579 aa).

This sequence belongs to the metallo-dependent hydrolases superfamily. Adenine deaminase family. Requires Mn(2+) as cofactor.

It carries out the reaction adenine + H2O + H(+) = hypoxanthine + NH4(+). This Listeria innocua serovar 6a (strain ATCC BAA-680 / CLIP 11262) protein is Adenine deaminase.